The primary structure comprises 218 residues: Guanylate kinase (218 aa).

One can recognise a Guanylate kinase-like domain in the interval 17–196 (GVLLALSSPS…ALEKLNEILH (180 aa)). An ATP-binding site is contributed by 24 to 31 (SPSGAGKT).

This sequence belongs to the guanylate kinase family.

The protein resides in the cytoplasm. It carries out the reaction GMP + ATP = GDP + ADP. Functionally, essential for recycling GMP and indirectly, cGMP. This chain is Guanylate kinase, found in Maricaulis maris (strain MCS10) (Caulobacter maris).